A 408-amino-acid polypeptide reads, in one-letter code: Acetate kinase (408 aa).

Asn7 contacts Mg(2+). Lys14 provides a ligand contact to ATP. Residue Arg91 participates in substrate binding. Residue Asp148 is the Proton donor/acceptor of the active site. ATP contacts are provided by residues 208 to 212 and 283 to 285; these read HLGNG and DLR. Glu388 provides a ligand contact to Mg(2+).

Belongs to the acetokinase family. As to quaternary structure, homodimer. It depends on Mg(2+) as a cofactor. The cofactor is Mn(2+).

The protein localises to the cytoplasm. It carries out the reaction acetate + ATP = acetyl phosphate + ADP. It participates in metabolic intermediate biosynthesis; acetyl-CoA biosynthesis; acetyl-CoA from acetate: step 1/2. Catalyzes the formation of acetyl phosphate from acetate and ATP. Can also catalyze the reverse reaction. This Borrelia hermsii (strain HS1 / DAH) protein is Acetate kinase.